Here is a 346-residue protein sequence, read N- to C-terminus: [LysW]-lysine/[LysW]-ornithine hydrolase (346 aa).

Residue histidine 68 participates in Zn(2+) binding. The active site involves aspartate 70. Residue aspartate 92 coordinates Zn(2+). Glutamate 122 (proton acceptor) is an active-site residue. Residues glutamate 123, glutamate 146, and histidine 317 each contribute to the Zn(2+) site.

The protein belongs to the peptidase M20A family. LysK subfamily. The cofactor is Zn(2+). Co(2+) serves as cofactor.

Its subcellular location is the cytoplasm. It carries out the reaction [amino-group carrier protein]-C-terminal-gamma-(L-lysyl)-L-glutamate + H2O = [amino-group carrier protein]-C-terminal-L-glutamate + L-lysine. The catalysed reaction is [amino-group carrier protein]-C-terminal-gamma-(L-ornithyl)-L-glutamate + H2O = [amino-group carrier protein]-C-terminal-L-glutamate + L-ornithine. It functions in the pathway amino-acid biosynthesis; L-lysine biosynthesis via AAA pathway; L-lysine from L-alpha-aminoadipate (Thermus route): step 5/5. Its pathway is amino-acid biosynthesis; L-arginine biosynthesis. Functionally, catalyzes the release of L-lysine from [LysW]-gamma-L-lysine and the release of L-ornithine from [LysW]-L-ornithine. The chain is [LysW]-lysine/[LysW]-ornithine hydrolase from Saccharolobus islandicus (strain Y.N.15.51 / Yellowstone #2) (Sulfolobus islandicus).